The chain runs to 515 residues: Maturase K (515 aa).

This sequence belongs to the intron maturase 2 family. MatK subfamily.

The protein localises to the plastid. The protein resides in the chloroplast. In terms of biological role, usually encoded in the trnK tRNA gene intron. Probably assists in splicing its own and other chloroplast group II introns. The sequence is that of Maturase K from Pinus densiflora (Japanese red pine).